We begin with the raw amino-acid sequence, 326 residues long: tRNA-modifying protein YgfZ (326 aa).

Folate is bound by residues Trp-27 and Trp-189.

This sequence belongs to the tRNA-modifying YgfZ family.

It is found in the cytoplasm. In terms of biological role, folate-binding protein involved in regulating the level of ATP-DnaA and in the modification of some tRNAs. It is probably a key factor in regulatory networks that act via tRNA modification, such as initiation of chromosomal replication. This chain is tRNA-modifying protein YgfZ, found in Salmonella paratyphi C (strain RKS4594).